The chain runs to 607 residues: Matrix metalloproteinase-16 (607 aa).

The signal sequence occupies residues Met1–Cys31. The propeptide occupies Ala32 to Arg119. The N-linked (GlcNAc...) asparagine glycan is linked to Asn83. The short motif at Pro99 to Gln106 is the Cysteine switch element. Zn(2+) is bound at residue Cys101. Residues Tyr120 to Ala564 lie on the Extracellular side of the membrane. Ca(2+) is bound at residue Asp183. Zn(2+) is bound by residues His193 and Asp195. Positions 200, 201, 203, and 205 each coordinate Ca(2+). His208 serves as a coordination point for Zn(2+). Ca(2+) is bound by residues Gly215, Gly217, and Asp219. His221 is a Zn(2+) binding site. Positions 223 and 226 each coordinate Ca(2+). His246 is a binding site for Zn(2+). Glu247 is a catalytic residue. 2 residues coordinate Zn(2+): His250 and His256. A disordered region spans residues Asp281 to Pro340. Residues Asp294–Ala315 are compositionally biased toward pro residues. Hemopexin repeat units lie at residues Pro340 to Leu388, Pro389 to Ile434, Pro436 to Pro484, and Glu485 to Cys532. Residues Cys343 and Cys532 are joined by a disulfide bond. The helical transmembrane segment at Ile565 to Phe585 threads the bilayer. Residues Gln586–Val607 are Cytoplasmic-facing.

This sequence belongs to the peptidase M10A family. Interacts with CSPG4 through CSPG4 chondroitin sulfate glycosaminoglycan. It depends on Zn(2+) as a cofactor. Requires Ca(2+) as cofactor. In terms of processing, the precursor is cleaved by a furin endopeptidase.

The protein localises to the cell membrane. Functionally, endopeptidase that degrades various components of the extracellular matrix, such as collagen type III and fibronectin. Activates progelatinase A. Involved in the matrix remodeling of blood vessels. It has no effect on type I, II, IV and V collagen. However, upon interaction with CSPG4, it may be involved in degradation and invasion of type I collagen by melanoma cells. The protein is Matrix metalloproteinase-16 (Mmp16) of Mus musculus (Mouse).